Consider the following 332-residue polypeptide: Glycerol-3-phosphate dehydrogenase [NAD(P)+] (332 aa).

NADPH-binding residues include tryptophan 15, arginine 35, and lysine 108. 3 residues coordinate sn-glycerol 3-phosphate: lysine 108, glycine 137, and serine 139. Alanine 141 contributes to the NADPH binding site. Sn-glycerol 3-phosphate contacts are provided by lysine 192, aspartate 245, serine 255, arginine 256, and asparagine 257. Catalysis depends on lysine 192, which acts as the Proton acceptor. Arginine 256 is an NADPH binding site. NADPH contacts are provided by leucine 278 and glutamate 280.

Belongs to the NAD-dependent glycerol-3-phosphate dehydrogenase family.

It is found in the cytoplasm. It carries out the reaction sn-glycerol 3-phosphate + NAD(+) = dihydroxyacetone phosphate + NADH + H(+). It catalyses the reaction sn-glycerol 3-phosphate + NADP(+) = dihydroxyacetone phosphate + NADPH + H(+). It functions in the pathway membrane lipid metabolism; glycerophospholipid metabolism. Its function is as follows. Catalyzes the reduction of the glycolytic intermediate dihydroxyacetone phosphate (DHAP) to sn-glycerol 3-phosphate (G3P), the key precursor for phospholipid synthesis. This Methylobacterium radiotolerans (strain ATCC 27329 / DSM 1819 / JCM 2831 / NBRC 15690 / NCIMB 10815 / 0-1) protein is Glycerol-3-phosphate dehydrogenase [NAD(P)+].